Here is a 566-residue protein sequence, read N- to C-terminus: Membrane protein insertase YidC (566 aa).

5 helical membrane-spanning segments follow: residues 3–23 (IKRI…FNAW), 346–366 (GWLW…HAVV), 369–389 (WGWS…WFSA), 436–456 (GGCL…YVII), and 509–529 (MWIL…GLVL).

The protein belongs to the OXA1/ALB3/YidC family. Type 1 subfamily. As to quaternary structure, interacts with the Sec translocase complex via SecD. Specifically interacts with transmembrane segments of nascent integral membrane proteins during membrane integration.

Its subcellular location is the cell inner membrane. In terms of biological role, required for the insertion and/or proper folding and/or complex formation of integral membrane proteins into the membrane. Involved in integration of membrane proteins that insert both dependently and independently of the Sec translocase complex, as well as at least some lipoproteins. Aids folding of multispanning membrane proteins. This chain is Membrane protein insertase YidC, found in Coxiella burnetii (strain RSA 331 / Henzerling II).